The chain runs to 85 residues: U4-theraphotoxin-Hhn1q (85 aa).

The N-terminal stretch at 1–22 is a signal peptide; sequence MKVTLIAILTCAAVLVLHTTAA. A propeptide spanning residues 23 to 48 is cleaved from the precursor; it reads EELEAESQLMEVGMPDTELAAVDEER. Intrachain disulfides connect cysteine 52-cysteine 66, cysteine 56-cysteine 77, and cysteine 71-cysteine 82.

This sequence belongs to the neurotoxin 12 (Hwtx-2) family. 02 (Hwtx-2) subfamily. In terms of tissue distribution, expressed by the venom gland.

It is found in the secreted. Its function is as follows. Postsynaptic neurotoxin. The protein is U4-theraphotoxin-Hhn1q of Cyriopagopus hainanus (Chinese bird spider).